The chain runs to 412 residues: Peptidase T (412 aa).

His-81 lines the Zn(2+) pocket. Asp-83 is an active-site residue. Asp-144 serves as a coordination point for Zn(2+). Catalysis depends on Glu-178, which acts as the Proton acceptor. Residues Glu-179, Asp-201, and His-383 each coordinate Zn(2+).

It belongs to the peptidase M20B family. Zn(2+) is required as a cofactor.

Its subcellular location is the cytoplasm. The catalysed reaction is Release of the N-terminal residue from a tripeptide.. Its function is as follows. Cleaves the N-terminal amino acid of tripeptides. In Bacillus cereus (strain ATCC 14579 / DSM 31 / CCUG 7414 / JCM 2152 / NBRC 15305 / NCIMB 9373 / NCTC 2599 / NRRL B-3711), this protein is Peptidase T.